A 138-amino-acid polypeptide reads, in one-letter code: Basic phospholipase A2 Cvv-N6 (138 aa).

An N-terminal signal peptide occupies residues 1-16 (MRTFWIVALLLVGVEG). 7 cysteine pairs are disulfide-bonded: Cys-42–Cys-131, Cys-44–Cys-60, Cys-59–Cys-111, Cys-65–Cys-138, Cys-66–Cys-104, Cys-73–Cys-97, and Cys-91–Cys-102. 3 residues coordinate Ca(2+): Tyr-43, Gly-45, and Gly-47. The active site involves His-63. Ca(2+) is bound at residue Asp-64. Asp-105 is a catalytic residue.

It belongs to the phospholipase A2 family. Group II subfamily. D49 sub-subfamily. In terms of assembly, monomer. Binds to calmodulin. Ca(2+) is required as a cofactor. Expressed by the venom gland.

The protein localises to the secreted. It carries out the reaction a 1,2-diacyl-sn-glycero-3-phosphocholine + H2O = a 1-acyl-sn-glycero-3-phosphocholine + a fatty acid + H(+). Its activity is regulated as follows. Heparin and wedelolactone inhibit the myotoxic activity. The PLA2 inhibitor, para-bromophenacyl bromide (BPB), inhibits enzymatic and myotoxic activities. Snake venom phospholipase A2 (PLA2) that is myotoxic and displays moderate edema-inducing activity in rat paws. Does not show neurotoxic activity. PLA2 catalyzes the calcium-dependent hydrolysis of the 2-acyl groups in 3-sn-phosphoglycerides. The polypeptide is Basic phospholipase A2 Cvv-N6 (Crotalus viridis viridis (Prairie rattlesnake)).